The following is a 274-amino-acid chain: Acyl-[acyl-carrier-protein]--UDP-N-acetylglucosamine O-acyltransferase (274 aa).

The protein belongs to the transferase hexapeptide repeat family. LpxA subfamily. In terms of assembly, homotrimer.

It localises to the cytoplasm. The enzyme catalyses a (3R)-hydroxyacyl-[ACP] + UDP-N-acetyl-alpha-D-glucosamine = a UDP-3-O-[(3R)-3-hydroxyacyl]-N-acetyl-alpha-D-glucosamine + holo-[ACP]. Its pathway is glycolipid biosynthesis; lipid IV(A) biosynthesis; lipid IV(A) from (3R)-3-hydroxytetradecanoyl-[acyl-carrier-protein] and UDP-N-acetyl-alpha-D-glucosamine: step 1/6. Involved in the biosynthesis of lipid A, a phosphorylated glycolipid that anchors the lipopolysaccharide to the outer membrane of the cell. In Bartonella henselae (strain ATCC 49882 / DSM 28221 / CCUG 30454 / Houston 1) (Rochalimaea henselae), this protein is Acyl-[acyl-carrier-protein]--UDP-N-acetylglucosamine O-acyltransferase.